A 38-amino-acid chain; its full sequence is Large ribosomal subunit protein bL36 (38 aa).

It belongs to the bacterial ribosomal protein bL36 family.

This chain is Large ribosomal subunit protein bL36, found in Saccharophagus degradans (strain 2-40 / ATCC 43961 / DSM 17024).